The chain runs to 567 residues: Nucleolus and neural progenitor protein (567 aa).

A Phosphoserine modification is found at serine 265. The tract at residues 437–457 (SKHHLRQRRSQNKFLRRQRKP) is disordered. Residues 442–460 (RQRRSQNKFLRRQRKPQRK) are nuclear localization signal.

It belongs to the nepro family.

Its subcellular location is the nucleus. The protein localises to the nucleolus. In terms of biological role, may play a role in cortex development as part of the Notch signaling pathway. Downstream of Notch may repress the expression of proneural genes and inhibit neuronal differentiation thereby maintaining neural progenitors. May also play a role in preimplentation embryo development. The chain is Nucleolus and neural progenitor protein from Homo sapiens (Human).